A 229-amino-acid chain; its full sequence is Cytidylate kinase (229 aa).

Residue 10–18 (GYSSCGKST) participates in ATP binding.

This sequence belongs to the cytidylate kinase family. Type 1 subfamily.

The protein localises to the cytoplasm. The catalysed reaction is CMP + ATP = CDP + ADP. The enzyme catalyses dCMP + ATP = dCDP + ADP. The chain is Cytidylate kinase from Phocaeicola vulgatus (strain ATCC 8482 / DSM 1447 / JCM 5826 / CCUG 4940 / NBRC 14291 / NCTC 11154) (Bacteroides vulgatus).